Reading from the N-terminus, the 381-residue chain is MALDNEAPVNSLGFAKSPAETRVVVAMSGGVDSSVVAAYLADQGYDVVGVTLQLYDHGAALAKKGACCAGIDIHDARRVAEERGFPHYVLDYENIFKDAVIDEFADSYLAGATPVPCIRCNERVKFKDLLETAKDLEADCMATGHYIQRKMGEHGPELHSAEDANRDQSYFLFSTTPEQLDFLRFPLGHLPSKDATREMAAQYGLSVADKPDSQDICFVPNGDYASVIQKLRPGAAEPGQIVHADGRVLGEHNGVIHYTIGQRRGLGIGGLSEPLYVVKLDVDQKQVIVGPKEMLATRRVPVREINWLGDAPFTSRDEWHLSVKVRSTRPPRDAIIRPISETEAEVELFSAEEGISPGQACVFYDPNGSRIYGGGWIWKGQ.

ATP contacts are provided by residues 26–33 (AMSGGVDS) and L52. Catalysis depends on C120, which acts as the Nucleophile. A disulfide bridge links C120 with C217. G144 serves as a coordination point for ATP. The tract at residues 166-168 (RDQ) is interaction with tRNA. The Cysteine persulfide intermediate role is filled by C217.

Belongs to the MnmA/TRMU family.

It localises to the cytoplasm. It catalyses the reaction S-sulfanyl-L-cysteinyl-[protein] + uridine(34) in tRNA + AH2 + ATP = 2-thiouridine(34) in tRNA + L-cysteinyl-[protein] + A + AMP + diphosphate + H(+). Catalyzes the 2-thiolation of uridine at the wobble position (U34) of tRNA, leading to the formation of s(2)U34. The sequence is that of tRNA-specific 2-thiouridylase MnmA from Ruegeria sp. (strain TM1040) (Silicibacter sp.).